Consider the following 821-residue polypeptide: Serine/threonine-protein kinase RAD53 (821 aa).

S24 bears the Phosphoserine mark. One can recognise an FHA 1 domain in the interval W66–V116. Phosphoserine is present on S175. In terms of domain architecture, Protein kinase spans S198–I466. Residues V204–V212 and K227 each bind ATP. D319 serves as the catalytic Proton acceptor. Phosphoserine is present on residues S547 and S560. The FHA 2 domain maps to F601–M664. Residues A735–D770 form a disordered region. Residues P742 to D770 show a composition bias toward low complexity. 2 positions are modified to phosphoserine: S774 and S793. Residues S791 to S821 form a disordered region. Polar residues predominate over residues D809–S821.

The protein belongs to the protein kinase superfamily. CAMK Ser/Thr protein kinase family. CHEK2 subfamily. As to quaternary structure, interacts (via domain FHA 1) with PTC2 (when phosphorylated); the interaction is direct and serves to regulate DNA damage checkpoint signaling. Interacts with PIN4. In terms of processing, autophosphorylated. Phosphorylated in response to DNA double-strand breaks; dephosphorylation is mediated by PTC2 and PTC3.

Its subcellular location is the nucleus. The enzyme catalyses L-seryl-[protein] + ATP = O-phospho-L-seryl-[protein] + ADP + H(+). It carries out the reaction L-threonyl-[protein] + ATP = O-phospho-L-threonyl-[protein] + ADP + H(+). It catalyses the reaction L-tyrosyl-[protein] + ATP = O-phospho-L-tyrosyl-[protein] + ADP + H(+). Its activity is regulated as follows. Inactivated by dephosphorylation via recruitment of PTC2. In terms of biological role, controls S-phase checkpoint as well as G1 and G2 DNA damage checkpoints. Phosphorylates proteins on serine, threonine, and tyrosine. Prevents entry into anaphase and mitotic exit after DNA damage via regulation of the Polo kinase CDC5. Seems to be involved in the phosphorylation of RPH1. This chain is Serine/threonine-protein kinase RAD53 (RAD53), found in Saccharomyces cerevisiae (strain ATCC 204508 / S288c) (Baker's yeast).